An 870-amino-acid polypeptide reads, in one-letter code: Rho GTPase-activating protein 7 (870 aa).

The region spanning 18-125 is the PH domain; the sequence is TVFKSGPLFI…WKTALEQALA (108 aa). One can recognise a Rho-GAP domain in the interval 167-367; that stretch reads LALEDIDGSP…VLLEDYGSIF (201 aa). 2 disordered regions span residues 378–432 and 446–465; these read STES…SGCT and DSDI…SNIR. The span at 407 to 417 shows a compositional bias: acidic residues; the sequence is NEVEPVTDDDN. The stretch at 569 to 693 forms a coiled coil; the sequence is GEDELAIQRL…HQLNQQRQTH (125 aa). Residues 736–793 are disordered; that stretch reads HEENVLGAEWRNSKGAGSFGVGNSRQPSRKQIPESTNTTDSKISEESGKISVDKLSSI. The span at 777-787 shows a compositional bias: basic and acidic residues; it reads KISEESGKISV.

Acts as a GTPase activator for the Rac-type GTPase by converting it to an inactive GDP-bound state. The polypeptide is Rho GTPase-activating protein 7 (ROPGAP7) (Arabidopsis thaliana (Mouse-ear cress)).